The chain runs to 405 residues: Acetyl-CoA decarbonylase/synthase complex subunit delta (405 aa).

Belongs to the CdhD family. Heterodimer of delta and gamma chains. The ACDS complex is made up of alpha, epsilon, beta, gamma and delta chains with a probable stoichiometry of (alpha(2)epsilon(2))(4)-beta(8)-(gamma(1)delta(1))(8).

In terms of biological role, part of a complex that catalyzes the reversible cleavage of acetyl-CoA, allowing autotrophic growth from CO(2). Probably maintains the overall quaternary structure of the ACDS complex. The chain is Acetyl-CoA decarbonylase/synthase complex subunit delta from Methanocaldococcus jannaschii (strain ATCC 43067 / DSM 2661 / JAL-1 / JCM 10045 / NBRC 100440) (Methanococcus jannaschii).